The primary structure comprises 258 residues: MIEIGETIIKFPPLKEGILIKRYKRFLADIELDDGEVVTAHCANTGPMKGVLWPGRRVRLKYSPSPKRKLDWSWEQAEVPSHNENKKCWVGINTSLPNKLIKHLIEANCLERQFGQISSIKPEVVYGLERKSRIDLLLYPSIQNEDSRKIFVEVKNTTWCEDSLALFPDTVTTRGQKHLKELMSVYPDSRAVLIPCISRSDIELFAPGEIADPEYGRLFREALTKGVEVIPCAFGFFIDHITWEGIRPFQKSRENKQF.

Belongs to the SfsA family.

The chain is Sugar fermentation stimulation protein homolog from Prochlorococcus marinus (strain NATL2A).